The following is a 212-amino-acid chain: uncharacterized protein (212 aa).

This is an uncharacterized protein from Acanthamoeba polyphaga mimivirus (APMV).